Consider the following 286-residue polypeptide: Putative type II secretion system L-type protein YghE (286 aa).

The chain crosses the membrane as a helical span at residues 136–156 (VMILPILLILVALAVERGVTL).

The protein belongs to the GSP L family.

Its subcellular location is the cell inner membrane. In terms of biological role, involved in a type II secretion system (T2SS, formerly general secretion pathway, GSP) for the export of folded proteins across the outer membrane. The chain is Putative type II secretion system L-type protein YghE from Escherichia coli (strain K12).